The following is a 340-amino-acid chain: Probable serine acetyltransferase 5 (340 aa).

Low complexity-rich tracts occupy residues 1–17 (MLVVVARKSSSSARVAA) and 54–64 (PAEVVPAFAPP). Positions 1–67 (MLVVVARKSS…VPAFAPPESE (67 aa)) are disordered.

This sequence belongs to the transferase hexapeptide repeat family. As to quaternary structure, homomultimer.

It carries out the reaction L-serine + acetyl-CoA = O-acetyl-L-serine + CoA. It functions in the pathway amino-acid biosynthesis; L-cysteine biosynthesis; L-cysteine from L-serine: step 1/2. The chain is Probable serine acetyltransferase 5 (SAT5) from Oryza sativa subsp. japonica (Rice).